A 73-amino-acid polypeptide reads, in one-letter code: Translational regulator CsrA (73 aa).

The protein belongs to the CsrA/RsmA family. As to quaternary structure, homodimer; the beta-strands of each monomer intercalate to form a hydrophobic core, while the alpha-helices form wings that extend away from the core.

The protein resides in the cytoplasm. Functionally, a translational regulator that binds mRNA to regulate translation initiation and/or mRNA stability. Usually binds in the 5'-UTR at or near the Shine-Dalgarno sequence preventing ribosome-binding, thus repressing translation. Its main target seems to be the major flagellin gene, while its function is anatagonized by FliW. This is Translational regulator CsrA from Clostridium kluyveri (strain NBRC 12016).